Here is a 254-residue protein sequence, read N- to C-terminus: Peptide methionine sulfoxide reductase A5 (254 aa).

Residues 1–33 (MAISLKRNRFFIPYTNLVFFFFLCVSLLDKTVS) form the signal peptide.

Belongs to the MsrA Met sulfoxide reductase family.

The enzyme catalyses L-methionyl-[protein] + [thioredoxin]-disulfide + H2O = L-methionyl-(S)-S-oxide-[protein] + [thioredoxin]-dithiol. It carries out the reaction [thioredoxin]-disulfide + L-methionine + H2O = L-methionine (S)-S-oxide + [thioredoxin]-dithiol. Catalyzes the reduction of methionine sulfoxide (MetSO) to methionine in proteins. Plays a protective role against oxidative stress by restoring activity to proteins that have been inactivated by methionine oxidation. MSRA family specifically reduces the MetSO S-enantiomer. This Arabidopsis thaliana (Mouse-ear cress) protein is Peptide methionine sulfoxide reductase A5 (MSRA5).